The chain runs to 72 residues: uncharacterized protein (72 aa).

An N-terminal signal peptide occupies residues 1–17 (MSLGLAIAVGIVLGVVA).

This is an uncharacterized protein from Schizosaccharomyces pombe (strain 972 / ATCC 24843) (Fission yeast).